A 290-amino-acid polypeptide reads, in one-letter code: MRIADYSVTRAILERHGFTFKKSFGQNFLTDTNILQKIVDTAEIDKKVNVIEIGPGIGALTEFLAESAAEVMAFEIDDRLVPILADTLRDFDNVTVVNQDILKVNLAQYIAEFKNPDLPIKVVANLPYYITTPILMHLIESGIPFSEFVVMMQREVADRISAQPNTKAYGSLSIAVQYYMTAKVAFIVPRKVFVPAPNVDSAILKMVRRERPAVEVQDEKFFFKVSKASFVHRRKTLWNNLTSYFGKSEETKGKLTAALERAELSPSVRGEALSLEEFACLADALKSEGL.

Residues Asn-27, Leu-29, Gly-54, Glu-75, Asp-100, and Asn-125 each coordinate S-adenosyl-L-methionine.

It belongs to the class I-like SAM-binding methyltransferase superfamily. rRNA adenine N(6)-methyltransferase family. RsmA subfamily.

The protein resides in the cytoplasm. It carries out the reaction adenosine(1518)/adenosine(1519) in 16S rRNA + 4 S-adenosyl-L-methionine = N(6)-dimethyladenosine(1518)/N(6)-dimethyladenosine(1519) in 16S rRNA + 4 S-adenosyl-L-homocysteine + 4 H(+). Specifically dimethylates two adjacent adenosines (A1518 and A1519) in the loop of a conserved hairpin near the 3'-end of 16S rRNA in the 30S particle. May play a critical role in biogenesis of 30S subunits. This chain is Ribosomal RNA small subunit methyltransferase A, found in Streptococcus sanguinis (strain SK36).